Here is a 328-residue protein sequence, read N- to C-terminus: UDP-glucose 4-epimerase (328 aa).

NAD(+) contacts are provided by residues 20-21 (FV), 41-46 (VRHAVN), 57-58 (DI), 77-81 (CAARA), Ser123, Tyr149, and Lys153. Substrate contacts are provided by Ser123 and Tyr149. Residue Tyr149 is the Proton acceptor of the active site. Substrate-binding positions include 198–199 (GI) and 215–217 (SIN).

This sequence belongs to the NAD(P)-dependent epimerase/dehydratase family. In terms of assembly, homodimer. It depends on NAD(+) as a cofactor.

It carries out the reaction UDP-alpha-D-glucose = UDP-alpha-D-galactose. It functions in the pathway bacterial outer membrane biogenesis; LPS O-antigen biosynthesis. In terms of biological role, involved in the metabolism of galactose. Catalyzes the conversion of UDP-galactose (UDP-Gal) to UDP-glucose (UDP-Glc) through a mechanism involving the transient reduction of NAD. The polypeptide is UDP-glucose 4-epimerase (galE) (Vibrio cholerae).